Reading from the N-terminus, the 490-residue chain is UDP-N-acetylmuramoyl-L-alanyl-D-glutamate--2,6-diaminopimelate ligase (490 aa).

UDP-N-acetyl-alpha-D-muramoyl-L-alanyl-D-glutamate contacts are provided by residues Leu-22, Ser-24, and 39–41 (HQT). 111 to 117 (GTNGKTT) lines the ATP pocket. Residues Asn-152, 153–154 (TT), Ser-180, Gln-186, and Arg-188 contribute to the UDP-N-acetyl-alpha-D-muramoyl-L-alanyl-D-glutamate site. Residue Lys-220 is modified to N6-carboxylysine. Meso-2,6-diaminopimelate is bound by residues Arg-385, 409 to 412 (DNPR), Gly-460, and Glu-464. The short motif at 409–412 (DNPR) is the Meso-diaminopimelate recognition motif element.

Belongs to the MurCDEF family. MurE subfamily. Mg(2+) serves as cofactor. Post-translationally, carboxylation is probably crucial for Mg(2+) binding and, consequently, for the gamma-phosphate positioning of ATP.

It is found in the cytoplasm. The enzyme catalyses UDP-N-acetyl-alpha-D-muramoyl-L-alanyl-D-glutamate + meso-2,6-diaminopimelate + ATP = UDP-N-acetyl-alpha-D-muramoyl-L-alanyl-gamma-D-glutamyl-meso-2,6-diaminopimelate + ADP + phosphate + H(+). It functions in the pathway cell wall biogenesis; peptidoglycan biosynthesis. In terms of biological role, catalyzes the addition of meso-diaminopimelic acid to the nucleotide precursor UDP-N-acetylmuramoyl-L-alanyl-D-glutamate (UMAG) in the biosynthesis of bacterial cell-wall peptidoglycan. The chain is UDP-N-acetylmuramoyl-L-alanyl-D-glutamate--2,6-diaminopimelate ligase from Yersinia pestis.